Consider the following 155-residue polypeptide: Endoribonuclease YbeY (155 aa).

Zn(2+)-binding residues include His-110, His-114, and His-120.

Belongs to the endoribonuclease YbeY family. Zn(2+) serves as cofactor.

It localises to the cytoplasm. Its function is as follows. Single strand-specific metallo-endoribonuclease involved in late-stage 70S ribosome quality control and in maturation of the 3' terminus of the 16S rRNA. The polypeptide is Endoribonuclease YbeY (Deinococcus radiodurans (strain ATCC 13939 / DSM 20539 / JCM 16871 / CCUG 27074 / LMG 4051 / NBRC 15346 / NCIMB 9279 / VKM B-1422 / R1)).